A 389-amino-acid chain; its full sequence is Phospho-N-acetylmuramoyl-pentapeptide-transferase (389 aa).

The next 10 helical transmembrane spans lie at 21–41 (FITFRAVFATLTALVIGLVTG), 70–90 (GTPTMGGVLILVSIGISTLLW), 97–117 (FIWVVLIVTLGFGAVGWVDDY), 134–154 (YMWQSIIGLFAAIYLAFSVSA), 189–209 (TISYPLGVWGFIALTYFVIVG), 222–242 (GLAIMPTVMVGTALGLFAYLT), 259–279 (AGELIIFCGAMAGAGLAFLWF), 286–306 (VFMGDVGALALGGALGTIAVI), 311–331 (VVLFIMGGIFVVETLSVMLQV), and 366–386 (QVVVRFWIITMMLVLFGLSTL).

This sequence belongs to the glycosyltransferase 4 family. MraY subfamily. Requires Mg(2+) as cofactor.

It is found in the cell inner membrane. It carries out the reaction UDP-N-acetyl-alpha-D-muramoyl-L-alanyl-gamma-D-glutamyl-meso-2,6-diaminopimeloyl-D-alanyl-D-alanine + di-trans,octa-cis-undecaprenyl phosphate = di-trans,octa-cis-undecaprenyl diphospho-N-acetyl-alpha-D-muramoyl-L-alanyl-D-glutamyl-meso-2,6-diaminopimeloyl-D-alanyl-D-alanine + UMP. The protein operates within cell wall biogenesis; peptidoglycan biosynthesis. Functionally, catalyzes the initial step of the lipid cycle reactions in the biosynthesis of the cell wall peptidoglycan: transfers peptidoglycan precursor phospho-MurNAc-pentapeptide from UDP-MurNAc-pentapeptide onto the lipid carrier undecaprenyl phosphate, yielding undecaprenyl-pyrophosphoryl-MurNAc-pentapeptide, known as lipid I. This is Phospho-N-acetylmuramoyl-pentapeptide-transferase from Janthinobacterium sp. (strain Marseille) (Minibacterium massiliensis).